We begin with the raw amino-acid sequence, 128 residues long: Fluoride-specific ion channel FluC (128 aa).

The next 4 membrane-spanning stretches (helical) occupy residues 7–27 (LAIG…AGLV), 37–57 (FGTL…IGAI), 73–93 (TGMM…FFLF), and 96–116 (ALYI…IILA). The Na(+) site is built by Gly-77 and Thr-80.

It belongs to the fluoride channel Fluc/FEX (TC 1.A.43) family.

It localises to the cell inner membrane. The catalysed reaction is fluoride(in) = fluoride(out). With respect to regulation, na(+) is not transported, but it plays an essential structural role and its presence is essential for fluoride channel function. Fluoride-specific ion channel. Important for reducing fluoride concentration in the cell, thus reducing its toxicity. The polypeptide is Fluoride-specific ion channel FluC (Nautilia profundicola (strain ATCC BAA-1463 / DSM 18972 / AmH)).